Here is a 129-residue protein sequence, read N- to C-terminus: Large ribosomal subunit protein uL22 (129 aa).

Belongs to the universal ribosomal protein uL22 family. As to quaternary structure, part of the 50S ribosomal subunit.

This protein binds specifically to 23S rRNA; its binding is stimulated by other ribosomal proteins, e.g. L4, L17, and L20. It is important during the early stages of 50S assembly. It makes multiple contacts with different domains of the 23S rRNA in the assembled 50S subunit and ribosome. Its function is as follows. The globular domain of the protein is located near the polypeptide exit tunnel on the outside of the subunit, while an extended beta-hairpin is found that lines the wall of the exit tunnel in the center of the 70S ribosome. In Brucella suis biovar 1 (strain 1330), this protein is Large ribosomal subunit protein uL22.